A 330-amino-acid polypeptide reads, in one-letter code: uncharacterized protein (330 aa).

The JmjC domain maps to 96–256; that stretch reads AALEFDFTDL…LMLAALRKKL (161 aa). Fe cation is bound by residues His145, Asp147, and His224.

It belongs to the ROX family. Fe(2+) is required as a cofactor.

This is an uncharacterized protein from Bacillus subtilis (strain 168).